The chain runs to 734 residues: Photosystem I P700 chlorophyll a apoprotein A2 (734 aa).

The next 8 helical transmembrane spans lie at 46-69 (IFAS…FHVA), 135-158 (LYTG…LHLQ), 175-199 (LNHH…HVAI), 273-291 (IAHH…GHMY), 330-353 (LHFQ…QHMY), 369-395 (AALY…IFFI), 417-439 (AIIS…LYVH), and 517-535 (FLVH…LILV). 2 residues coordinate [4Fe-4S] cluster: Cys559 and Cys568. 2 helical membrane-spanning segments follow: residues 575–596 (AFYL…YWHW) and 643–665 (LSVW…MFLI). Residues His654, Met662, and Tyr670 each contribute to the chlorophyll a site. Trp671 serves as a coordination point for phylloquinone. Residues 707 to 727 (LVGLAHFSVGYIFTYAAFLIA) traverse the membrane as a helical segment.

This sequence belongs to the PsaA/PsaB family. As to quaternary structure, the PsaA/B heterodimer binds the P700 chlorophyll special pair and subsequent electron acceptors. PSI consists of a core antenna complex that captures photons, and an electron transfer chain that converts photonic excitation into a charge separation. The eukaryotic PSI reaction center is composed of at least 11 subunits. P700 is a chlorophyll a/chlorophyll a' dimer, A0 is one or more chlorophyll a, A1 is one or both phylloquinones and FX is a shared 4Fe-4S iron-sulfur center. serves as cofactor.

It is found in the plastid. The protein resides in the chloroplast thylakoid membrane. The enzyme catalyses reduced [plastocyanin] + hnu + oxidized [2Fe-2S]-[ferredoxin] = oxidized [plastocyanin] + reduced [2Fe-2S]-[ferredoxin]. In terms of biological role, psaA and PsaB bind P700, the primary electron donor of photosystem I (PSI), as well as the electron acceptors A0, A1 and FX. PSI is a plastocyanin-ferredoxin oxidoreductase, converting photonic excitation into a charge separation, which transfers an electron from the donor P700 chlorophyll pair to the spectroscopically characterized acceptors A0, A1, FX, FA and FB in turn. Oxidized P700 is reduced on the lumenal side of the thylakoid membrane by plastocyanin. The chain is Photosystem I P700 chlorophyll a apoprotein A2 from Coffea arabica (Arabian coffee).